Reading from the N-terminus, the 316-residue chain is Probable peptidyl-tRNA hydrolase 2 (316 aa).

Positions 1 to 127 (MSENIPDIDP…SHPVDPQEPN (127 aa)) are disordered. The segment covering 44 to 53 (PTPSSVTVDN) has biased composition (polar residues). A compositionally biased stretch (low complexity) spans 75–89 (IPEVPIPSSAISISS). The UBA domain occupies 128–169 (EVNNEYLAHLLDLGFDEYTAVLALKRTNSAGVEQAVAWIVER). A disordered region spans residues 170 to 193 (SNESDFDEDSSSSENEADEEMGAV). Positions 173 to 190 (SDFDEDSSSSENEADEEM) are enriched in acidic residues.

Belongs to the PTH2 family.

It catalyses the reaction an N-acyl-L-alpha-aminoacyl-tRNA + H2O = an N-acyl-L-amino acid + a tRNA + H(+). Functionally, the natural substrate for this enzyme may be peptidyl-tRNAs which drop off the ribosome during protein synthesis. This is Probable peptidyl-tRNA hydrolase 2 from Caenorhabditis elegans.